A 474-amino-acid chain; its full sequence is Hepatocyte nuclear factor 4-alpha (474 aa).

A DNA-binding region (nuclear receptor) is located at residues 57–132 (SALCAICGDR…AGMKKEAVQN (76 aa)). 2 NR C4-type zinc fingers span residues 60-80 (CAIC…CDGC) and 96-120 (CRFS…LKKC). A phosphoserine; by PKA mark is found at serine 142 and serine 143. A Phosphotyrosine modification is found at tyrosine 144. The NR LBD domain maps to 147–377 (SSLPSINALL…NLLQEMLLGG (231 aa)). At threonine 166 the chain carries Phosphothreonine. Phosphoserine is present on serine 167. Glycyl lysine isopeptide (Lys-Gly) (interchain with G-Cter in ubiquitin) cross-links involve residues lysine 234 and lysine 307. Serine 313 is subject to Phosphoserine; by AMPK. A 9aaTAD motif is present at residues 368-376 (NLLQEMLLG). Residues 413 to 450 (SNGQMCEWPRPRGQAATPETPQPSPPSGSGSESYKLLP) form a disordered region. Residues threonine 429 and threonine 432 each carry the phosphothreonine modification. Residue serine 436 is modified to Phosphoserine. Residue lysine 458 is modified to N6-acetyllysine.

The protein belongs to the nuclear hormone receptor family. NR2 subfamily. Homodimerization is required for HNF4-alpha to bind to its recognition site. Interacts with CLOCK, BMAL1, CRY1, CRY2, PER1 and PER2. Interacts with NR0B2/SHP; the resulting heterodimer is transcriptionally inactive. Interacts with DDX3X; this interaction disrupts the interaction between HNF4 and NR0B2 that forms inactive heterodimers and enhances the formation of active HNF4 homodimers. Phosphorylation at Ser-313 by AMPK reduces the ability to form homodimers and bind DNA. Phosphorylated in the recognition sequence R-R-S-S near the DNA-binding domain; phosphorylation results in decrease in DNA-binding activity. Phosphorylation of HNF4 depends on the diet and is decreased by a carbohydrate-rich diet and is increased by fasting. Post-translationally, the N-terminus is blocked. In terms of processing, acetylation at Lys-458 lowers transcriptional activation by about two-fold. In terms of tissue distribution, liver, kidney and intestine.

The protein localises to the nucleus. In terms of biological role, transcriptional regulator which controls the expression of hepatic genes during the transition of endodermal cells to hepatic progenitor cells, facilitating the recruitment of RNA pol II to the promoters of target genes. Activates the transcription of CYP2C38. Represses the CLOCK-BMAL1 transcriptional activity and is essential for circadian rhythm maintenance and period regulation in the liver and colon cells. In Rattus norvegicus (Rat), this protein is Hepatocyte nuclear factor 4-alpha (Hnf4a).